The primary structure comprises 113 residues: Pancreatic progenitor cell differentiation and proliferation factor A (113 aa).

Belongs to the PPDPF family.

Its function is as follows. Probable regulator of exocrine pancreas development. This Xenopus laevis (African clawed frog) protein is Pancreatic progenitor cell differentiation and proliferation factor A (ppdpf-a).